The sequence spans 228 residues: ATP-dependent dethiobiotin synthetase BioD (228 aa).

Residue E12–T17 coordinates ATP. T16 lines the Mg(2+) pocket. The active site involves K37. S41 is a binding site for substrate. ATP-binding positions include D54, E116–G119, and P205–L207. Mg(2+) contacts are provided by D54 and E116.

This sequence belongs to the dethiobiotin synthetase family. As to quaternary structure, homodimer. Requires Mg(2+) as cofactor.

The protein resides in the cytoplasm. It carries out the reaction (7R,8S)-7,8-diammoniononanoate + CO2 + ATP = (4R,5S)-dethiobiotin + ADP + phosphate + 3 H(+). It functions in the pathway cofactor biosynthesis; biotin biosynthesis; biotin from 7,8-diaminononanoate: step 1/2. Functionally, catalyzes a mechanistically unusual reaction, the ATP-dependent insertion of CO2 between the N7 and N8 nitrogen atoms of 7,8-diaminopelargonic acid (DAPA, also called 7,8-diammoniononanoate) to form a ureido ring. The protein is ATP-dependent dethiobiotin synthetase BioD of Pseudomonas aeruginosa (strain UCBPP-PA14).